The following is a 324-amino-acid chain: Glyoxylate/hydroxypyruvate reductase B (324 aa).

Active-site residues include R237 and E266. H285 acts as the Proton donor in catalysis.

It belongs to the D-isomer specific 2-hydroxyacid dehydrogenase family. GhrB subfamily. Homodimer.

The protein resides in the cytoplasm. It carries out the reaction glycolate + NADP(+) = glyoxylate + NADPH + H(+). The catalysed reaction is (R)-glycerate + NAD(+) = 3-hydroxypyruvate + NADH + H(+). It catalyses the reaction (R)-glycerate + NADP(+) = 3-hydroxypyruvate + NADPH + H(+). In terms of biological role, catalyzes the NADPH-dependent reduction of glyoxylate and hydroxypyruvate into glycolate and glycerate, respectively. The protein is Glyoxylate/hydroxypyruvate reductase B of Salmonella paratyphi B (strain ATCC BAA-1250 / SPB7).